Reading from the N-terminus, the 96-residue chain is Cystatin (96 aa).

Residues 22–65 (DFIKAALNETGTHAGRKYKVLRSSQQVVAGMKYTFYIVFEDDES) form the Cystatin domain. N29 is a glycosylation site (N-linked (GlcNAc...) asparagine).

Belongs to the cystatin family. In terms of assembly, interacts with cathepsin L-like peptidase; the interaction results in inhibition of cathepsin L-like peptidase activity. Salivary gland. Midgut.

Functionally, cysteine proteinase inhibitor. Inhibits cathepsin L-like peptidase. Increases cell viability following apoptosis induction by staurosporine. Inhibits human cathepsin S (CTSS), human cathepsin L2 (CTSV), human cathepsin L (CTSL), human cathepsin B (CTSB) and papain. In terms of biological role, (Microbial infection) Modulates dengue virus type 2 replication in salivary glands. The sequence is that of Cystatin from Aedes aegypti (Yellowfever mosquito).